The following is a 177-amino-acid chain: Putative peroxiredoxin (177 aa).

The Thioredoxin domain occupies 8 to 177; it reads TAKGNEIPDT…ASIDTILTKV (170 aa). Cys-64 functions as the Cysteine sulfenic acid (-SOH) intermediate in the catalytic mechanism. The Microbody targeting signal motif lies at 175 to 177; sequence TKV.

This sequence belongs to the peroxiredoxin family. Prx5 subfamily. Homodimer; disulfide-linked, upon oxidation.

It catalyses the reaction a hydroperoxide + [thioredoxin]-dithiol = an alcohol + [thioredoxin]-disulfide + H2O. Its function is as follows. Thiol-specific peroxidase that catalyzes the reduction of hydrogen peroxide and organic hydroperoxides to water and alcohols, respectively. Plays a role in cell protection against oxidative stress by detoxifying peroxides and as sensor of hydrogen peroxide-mediated signaling events. This Malassezia furfur (Pityriasis versicolor infection agent) protein is Putative peroxiredoxin.